Consider the following 59-residue polypeptide: MAVPARKTSKAKKRLRRTHQTVVKPEISFDEANGDYRRSHHVSLKGYYNGKKVIKGASK.

The protein belongs to the bacterial ribosomal protein bL32 family.

This chain is Large ribosomal subunit protein bL32B (rpmF2), found in Enterococcus faecalis (strain ATCC 700802 / V583).